The chain runs to 901 residues: HTH-type transcriptional regulator MalT (901 aa).

S39–T46 lines the ATP pocket. In terms of domain architecture, HTH luxR-type spans E829–L894. The H-T-H motif DNA-binding region spans N853–R872.

It belongs to the MalT family. Monomer in solution. Oligomerizes to an active state in the presence of the positive effectors ATP and maltotriose.

Its activity is regulated as follows. Activated by ATP and maltotriose, which are both required for DNA binding. Its function is as follows. Positively regulates the transcription of the maltose regulon whose gene products are responsible for uptake and catabolism of malto-oligosaccharides. Specifically binds to the promoter region of its target genes, recognizing a short DNA motif called the MalT box. This Escherichia coli (strain ATCC 8739 / DSM 1576 / NBRC 3972 / NCIMB 8545 / WDCM 00012 / Crooks) protein is HTH-type transcriptional regulator MalT.